Consider the following 278-residue polypeptide: MFQLLRCVPRVLGTAVAGLRAAAPSLPRLQPASRPCARPFGLLSVRARSVQLPGLLKPRGPCACGCGCSGLHTEGDKAFVDFLSDEIKEEKKIQKYKSLPKMSGGWELEVNGTEAKLVRKVAGEKITVTFNINNSIPPAFGGEEEEPSQGQKAEEQEPELTSTPNFVVEVTKDGSSKALVLDCHYPEDEIGQEDDQSDIFSIKEVSFQATGESDWKDTNYTLNTDSLDWGLYDHLMDFLADRGVDNTFADELVELSTALEHQEYISFLEDLKGFVKSK.

A mitochondrion-targeting transit peptide spans 1–70 (MFQLLRCVPR…PCACGCGCSG (70 aa)). The segment at 73 to 90 (TEGDKAFVDFLSDEIKEE) is C1q binding. Serine 84 carries the post-translational modification Phosphoserine. An N6-acetyllysine mark is found at lysine 88 and lysine 91. Positions 136 to 164 (IPPAFGGEEEEPSQGQKAEEQEPELTSTP) are disordered. The interval 166–209 (FVVEVTKDGSSKALVLDCHYPEDEIGQEDDQSDIFSIKEVSFQA) is interaction with MAVS. Tyrosine 185 carries the phosphotyrosine modification. Residues serine 197 and serine 201 each carry the phosphoserine modification. Position 210 is a phosphothreonine (threonine 210).

It belongs to the MAM33 family. As to quaternary structure, homotrimer; three monomers form a donut-shaped structure with an unusually asymmetric charge distribution on the surface. Interacts with CDK13, HRK, VTN, NFYB, ADRA1B, FOXC1, DDX21, DDX50, NCL, SRSF1 and SRSF9. Interacts with CD93; the association may represent a cell surface C1q receptor. Interacts with KRT1; the association represents a cell surface kininogen receptor. Interacts with CD209; the interaction is indicative for a C1q:C1QBP:CD209 signaling complex. Interacts with FBL and RRP1; the respective interactions with C1QBP are competitive. Probably associates with the mitoribosome. Interacts with MAVS; the interaction occurs upon viral transfection. Interacts with PPIF. Interacts with U2AF1L4. Interacts with PLEKHN1. Interacts with VGF-derived peptide TLQP-21. Interacts with MRE11 and RAD50; forming the MRC (MRE11-RAD50-C1QBP) complex that inhibits the activity of MRE11.

The protein resides in the mitochondrion matrix. Its subcellular location is the nucleus. The protein localises to the cell membrane. It localises to the secreted. It is found in the cytoplasm. The protein resides in the nucleolus. Multifunctional and multicompartmental protein involved in inflammation and infection processes, ribosome biogenesis, protein synthesis in mitochondria, regulation of apoptosis, transcriptional regulation and pre-mRNA splicing. At the cell surface is thought to act as an endothelial receptor for plasma proteins of the complement and kallikrein-kinin cascades. Putative receptor for C1q; specifically binds to the globular 'heads' of C1q thus inhibiting C1; may perform the receptor function through a complex with C1qR/CD93. In complex with cytokeratin-1/KRT1 is a high affinity receptor for kininogen-1/HMWK. Can also bind other plasma proteins, such as coagulation factor XII leading to its autoactivation. May function to bind initially fluid kininogen-1 to the cell membrane. The secreted form may enhance both extrinsic and intrinsic coagulation pathways. It is postulated that the cell surface form requires docking with transmembrane proteins for downstream signaling which might be specific for a cell-type or response. By acting as C1q receptor is involved in chemotaxis of immature dendritic cells and neutrophils and is proposed to signal through CD209/DC-SIGN on immature dendritic cells, through integrin alpha-4/beta-1 during trophoblast invasion of the decidua, and through integrin beta-1 during endothelial cell adhesion and spreading. Signaling involved in inhibition of innate immune response is implicating the PI3K-AKT/PKB pathway. Required for protein synthesis in mitochondria. In mitochondrial translation may be involved in formation of functional 55S mitoribosomes; the function seems to involve its RNA-binding activity. Acts as a RNA modification reader, which specifically recognizes and binds mitochondrial RNAs modified by C5-methylcytosine (m5C) in response to stress, and promotes recruitment of the mitochondrial degradosome complex, leading to their degradation. May be involved in the nucleolar ribosome maturation process; the function may involve the exchange of FBL for RRP1 in the association with pre-ribosome particles. Involved in regulation of RNA splicing by inhibiting the RNA-binding capacity of SRSF1 and its phosphorylation. Is required for the nuclear translocation of splicing factor U2AF1L4. Involved in regulation of CDKN2A- and HRK-mediated apoptosis. Stabilizes mitochondrial CDKN2A isoform smARF. May be involved in regulation of FOXC1 transcriptional activity and NFY/CCAAT-binding factor complex-mediated transcription. May play a role in antibacterial defense as it can bind to cell surface hyaluronan and inhibit Streptococcus pneumoniae hyaluronate lyase. May be involved in modulation of the immune response; ligation by HCV core protein is resulting in suppression of interleukin-12 production in monocyte-derived dendritic cells. Involved in regulation of antiviral response by inhibiting RIGI- and IFIH1-mediated signaling pathways probably involving its association with MAVS after viral infection. Acts as a regulator of DNA repair via homologous recombination by inhibiting the activity of MRE11: interacts with unphosphorylated MRE11 and RAD50 in absence of DNA damage, preventing formation and activity of the MRN complex. Following DNA damage, dissociates from phosphorylated MRE11, allowing formation of the MRN complex. This Bos taurus (Bovine) protein is Complement component 1 Q subcomponent-binding protein, mitochondrial (C1QBP).